A 1394-amino-acid chain; its full sequence is DNA-directed RNA polymerase subunit beta' (1394 aa).

Cys71, Cys73, Cys86, and Cys89 together coordinate Zn(2+). Mg(2+)-binding residues include Asp462, Asp464, and Asp466. Zn(2+) is bound by residues Cys810, Cys884, Cys891, and Cys894.

This sequence belongs to the RNA polymerase beta' chain family. As to quaternary structure, the RNAP catalytic core consists of 2 alpha, 1 beta, 1 beta' and 1 omega subunit. When a sigma factor is associated with the core the holoenzyme is formed, which can initiate transcription. It depends on Mg(2+) as a cofactor. Zn(2+) is required as a cofactor.

The enzyme catalyses RNA(n) + a ribonucleoside 5'-triphosphate = RNA(n+1) + diphosphate. DNA-dependent RNA polymerase catalyzes the transcription of DNA into RNA using the four ribonucleoside triphosphates as substrates. This is DNA-directed RNA polymerase subunit beta' from Caulobacter sp. (strain K31).